The primary structure comprises 214 residues: Neurogenin-3 (214 aa).

The segment covering 1-14 (MTPQPSGAPTVQVT) has biased composition (polar residues). The segment at 1-98 (MTPQPSGAPT…NDRERNRMHN (98 aa)) is disordered. Positions 15 to 26 (RETERSFPRASE) are enriched in basic and acidic residues. Composition is skewed to basic residues over residues 57 to 70 (APRK…GRSR) and 79 to 88 (KQRRSRRKKA). In terms of domain architecture, bHLH spans 83–135 (SRRKKANDRERNRMHNLNSALDALRGVLPTFPDDAKLTKIETLRFAHNYIWAL).

As to quaternary structure, efficient DNA binding requires dimerization with another bHLH protein. Interacts with ATOH8.

It is found in the nucleus. In terms of biological role, acts as a transcriptional regulator. Together with NKX2-2, initiates transcriptional activation of NEUROD1. Involved in neurogenesis. Also required for the specification of a common precursor of the 4 pancreatic endocrine cell types. In Homo sapiens (Human), this protein is Neurogenin-3 (NEUROG3).